A 264-amino-acid chain; its full sequence is Thymidylate synthase (264 aa).

A dUMP-binding site is contributed by R21. A (6R)-5,10-methylene-5,6,7,8-tetrahydrofolate-binding site is contributed by H51. Residue 126–127 (RR) participates in dUMP binding. The active-site Nucleophile is the C146. Residues 166 to 169 (RSAD), N177, and 207 to 209 (HIY) contribute to the dUMP site. D169 is a binding site for (6R)-5,10-methylene-5,6,7,8-tetrahydrofolate. A263 serves as a coordination point for (6R)-5,10-methylene-5,6,7,8-tetrahydrofolate.

It belongs to the thymidylate synthase family. Bacterial-type ThyA subfamily. As to quaternary structure, homodimer.

The protein resides in the cytoplasm. It catalyses the reaction dUMP + (6R)-5,10-methylene-5,6,7,8-tetrahydrofolate = 7,8-dihydrofolate + dTMP. It participates in pyrimidine metabolism; dTTP biosynthesis. Catalyzes the reductive methylation of 2'-deoxyuridine-5'-monophosphate (dUMP) to 2'-deoxythymidine-5'-monophosphate (dTMP) while utilizing 5,10-methylenetetrahydrofolate (mTHF) as the methyl donor and reductant in the reaction, yielding dihydrofolate (DHF) as a by-product. This enzymatic reaction provides an intracellular de novo source of dTMP, an essential precursor for DNA biosynthesis. The chain is Thymidylate synthase from Brucella ovis (strain ATCC 25840 / 63/290 / NCTC 10512).